Here is a 542-residue protein sequence, read N- to C-terminus: CTP synthase (542 aa).

The tract at residues 1 to 265 (MARYIFITGG…DQEVLSAFGI (265 aa)) is amidoligase domain. Residue Ser-13 coordinates CTP. Position 13 (Ser-13) interacts with UTP. An ATP-binding site is contributed by 14 to 19 (SLGKGL). An L-glutamine-binding site is contributed by Tyr-54. Asp-71 contributes to the ATP binding site. Mg(2+)-binding residues include Asp-71 and Glu-139. Residues 146–148 (DIE), 186–191 (KTKPTQ), and Lys-222 contribute to the CTP site. UTP contacts are provided by residues 186 to 191 (KTKPTQ) and Lys-222. An ATP-binding site is contributed by 238 to 240 (RDV). A Glutamine amidotransferase type-1 domain is found at 291–541 (TIAIVGKYTG…IAAAMEQSRL (251 aa)). Gly-353 is an L-glutamine binding site. Residue Cys-380 is the Nucleophile; for glutamine hydrolysis of the active site. L-glutamine is bound by residues 381 to 384 (FGMQ), Glu-404, and Arg-469. Catalysis depends on residues His-514 and Glu-516.

Belongs to the CTP synthase family. Homotetramer.

The enzyme catalyses UTP + L-glutamine + ATP + H2O = CTP + L-glutamate + ADP + phosphate + 2 H(+). It catalyses the reaction L-glutamine + H2O = L-glutamate + NH4(+). It carries out the reaction UTP + NH4(+) + ATP = CTP + ADP + phosphate + 2 H(+). It functions in the pathway pyrimidine metabolism; CTP biosynthesis via de novo pathway; CTP from UDP: step 2/2. Its activity is regulated as follows. Allosterically activated by GTP, when glutamine is the substrate; GTP has no effect on the reaction when ammonia is the substrate. The allosteric effector GTP functions by stabilizing the protein conformation that binds the tetrahedral intermediate(s) formed during glutamine hydrolysis. Inhibited by the product CTP, via allosteric rather than competitive inhibition. In terms of biological role, catalyzes the ATP-dependent amination of UTP to CTP with either L-glutamine or ammonia as the source of nitrogen. Regulates intracellular CTP levels through interactions with the four ribonucleotide triphosphates. In Beijerinckia indica subsp. indica (strain ATCC 9039 / DSM 1715 / NCIMB 8712), this protein is CTP synthase.